The sequence spans 775 residues: Dipeptidyl peptidase 4 (775 aa).

Residues 1–15 (MKLLSLLMLAGIAQA) form the signal peptide. N-linked (GlcNAc...) asparagine glycans are attached at residues Asn-81, Asn-111, Asn-154, and Asn-219. Active-site charge relay system residues include Ser-613, Asp-690, and His-725.

It belongs to the peptidase S9B family.

The protein resides in the secreted. The catalysed reaction is Release of an N-terminal dipeptide, Xaa-Yaa-|-Zaa-, from a polypeptide, preferentially when Yaa is Pro, provided Zaa is neither Pro nor hydroxyproline.. Extracellular dipeptidyl-peptidase which removes N-terminal dipeptides sequentially from polypeptides having unsubstituted N-termini provided that the penultimate residue is proline. Contributes to pathogenicity. In Trichophyton rubrum (Athlete's foot fungus), this protein is Dipeptidyl peptidase 4 (DPP4).